Consider the following 473-residue polypeptide: Glutamate--tRNA ligase (473 aa).

Residues 11 to 21 (PSPTGFLHIGG) carry the 'HIGH' region motif. The 'KMSKS' region signature appears at 240-244 (KLSKR). K243 serves as a coordination point for ATP.

It belongs to the class-I aminoacyl-tRNA synthetase family. Glutamate--tRNA ligase type 1 subfamily. Monomer.

The protein localises to the cytoplasm. The enzyme catalyses tRNA(Glu) + L-glutamate + ATP = L-glutamyl-tRNA(Glu) + AMP + diphosphate. Its function is as follows. Catalyzes the attachment of glutamate to tRNA(Glu) in a two-step reaction: glutamate is first activated by ATP to form Glu-AMP and then transferred to the acceptor end of tRNA(Glu). This chain is Glutamate--tRNA ligase, found in Rhodopseudomonas palustris (strain TIE-1).